Consider the following 1873-residue polypeptide: Girdin (1873 aa).

The 121-residue stretch at 12 to 132 (QFMTSPLVTW…KLLLLLLGCA (121 aa)) folds into the Calponin-homology (CH) domain. A coiled-coil region spans residues 196 to 425 (HLRRLIDERD…EMAQKQSMDE (230 aa)). Phosphoserine occurs at positions 233, 237, and 449. 2 coiled-coil regions span residues 458-1232 (TSSK…ESKN) and 1268-1385 (HKNL…KFYD). Disordered regions lie at residues 816–841 (ENKS…NKRL) and 1013–1034 (EERM…GRES). Phosphoserine is present on Ser1020. Phosphoserine is present on Ser1387. Residues 1390–1408 (RRRGNWITLKMRKLIKSKK) are phosphoinositide-binding. The span at 1407–1416 (KKDINRERQK) shows a compositional bias: basic and acidic residues. 3 disordered regions span residues 1407–1459 (KKDI…LGTK), 1560–1602 (TTSF…SNNN), and 1616–1643 (QSRP…GSSP). The residue at position 1417 (Ser1417) is a Phosphoserine; by PKB/AKT1. Composition is skewed to polar residues over residues 1417 to 1430 (SLTL…SSEG), 1445 to 1459 (VGSN…LGTK), 1560 to 1579 (TTSF…STGS), and 1616 to 1626 (QSRPQSHSSGD). Residue Thr1421 is modified to Phosphothreonine. Residues 1674–1704 (KAGSPGSEVVTLQQFLEESNKLTSIQLKSSS) carry the GBA motif. Residues Ser1677, Ser1692, and Ser1719 each carry the phosphoserine modification. The segment at 1715–1825 (SLSVSSDFLG…GTTRRTSIHD (111 aa)) is SH2-like; required for interaction with growth factor receptors. Residues 1738-1873 (SGKTPGDFYD…KSRSREQQSS (136 aa)) are disordered. The segment covering 1745-1755 (FYDRRTTKPEF) has biased composition (basic and acidic residues). A Phosphotyrosine modification is found at Tyr1767. Polar residues-rich tracts occupy residues 1768–1781 (TISS…STQG), 1789–1801 (TSVS…SNPY), and 1809–1820 (SVISTAEGTTRR). Tyr1801 is subject to Phosphotyrosine. Residues Ser1822 and Ser1839 each carry the phosphoserine modification. Residues 1822–1832 (SIHDFLSKDSR) show a composition bias toward basic and acidic residues. The span at 1839–1852 (SSPPTAGSSSTTAS) shows a compositional bias: low complexity. The segment covering 1858–1873 (QESRNSKSRSREQQSS) has biased composition (basic and acidic residues).

The protein belongs to the CCDC88 family. In terms of assembly, homodimer. Interacts (via GBA motif) with guanine nucleotide-binding protein G(i) alpha subunits GNAI1, GNAI2 and GNAI3. Also interacts (via GNA motif) with guanine nucleotide-binding protein G(s) alpha subunit GNAS. Interaction with G(i) alpha subunits occurs before interaction with GNAS and is regulated by phosphorylation; phosphorylation at Ser-1677 enhances binding to G(i) alpha subunits while phosphorylation at Ser-1692 abolishes G(i) alpha subunit binding, promoting binding to GNAS. Interacts (via C-terminal SH2-like region) with growth factor receptors EGFR, INSR and KDR/VEGFR2 (via their autophosphorylated cytoplasmic tails). Forms a complex with EGFR and GNAI3 which leads to enhanced EGFR signaling and triggering of cell migration; ligand stimulation is required for recruitment of GNAI3 to the complex. Interacts (tyrosine-phosphorylated form) with phosphatidylinositol 3-kinase (PI3K) regulatory subunit PIK3R1/p85a (via SH2 domains); the interaction enables recruitment of PIK3R1 to the EGFR receptor, enhancing PI3K activity and cell migration. Interacts with serine/threonine-protein kinase PRKCQ; the interaction leads to phosphorylation of CCDC88A and inhibition of its guanine nucleotide exchange factor activity. Interacts (via C-terminus) with DISC1; the interaction is direct. Interacts with AKT proteins; the interaction is inhibited in the presence of DISC1. Interacts with AKT1/PKB (via C-terminus). The non-phosphorylated form interacts with phosphatidylinositol 4-phosphate [Pi(4)P] and weakly with phosphatidylinositol 3-phosphate [Pi(3)P]. Interacts with microtubules. Interacts with actin. In terms of processing, phosphorylation is induced by epidermal growth factor (EGF) in a phosphoinositide 3-kinase (PI3K)-dependent manner. Phosphorylation by AKT1/PKB is necessary for the delocalization from the cell membrane and for cell migration. Phosphorylated on tyrosine residues which promotes binding to phosphatidylinositol 3-kinase (PI3K) regulatory subunit PIK3R1/p85a and enhances PI3K activity. Tyrosine-phosphorylated by both receptor and non-receptor tyrosine kinases in vitro. Tyrosine phosphorylation is required for AKT1-dependent phosphorylation of Ser-1417. Phosphorylation at Ser-1692 by PRKCQ disrupts interaction with GNAI3 and inhibits guanine nucleotide exchange factor activity. As to expression, expressed in the dentate gyrus, pyramidal cell layer of hippocampal regions CA1 and CA3 at postnatal 15. Expressed highly in neurons. Weakly in neuron progenitors (at protein level). Expressed in the dentate granule cell layer of the hippocampus. Expressed highly in the adult testis, moderately in the brain and at a low level in the spleen, lungs and fat.

The protein localises to the cell membrane. The protein resides in the cytoplasm. It localises to the cytosol. Its subcellular location is the cytoplasmic vesicle. It is found in the cell projection. The protein localises to the lamellipodium. The protein resides in the cytoskeleton. It localises to the cilium basal body. Its subcellular location is the microtubule organizing center. It is found in the centrosome. The protein localises to the centriole. Its function is as follows. Bifunctional modulator of guanine nucleotide-binding proteins (G proteins). Acts as a non-receptor guanine nucleotide exchange factor which binds to and activates guanine nucleotide-binding protein G(i) alpha subunits. Also acts as a guanine nucleotide dissociation inhibitor for guanine nucleotide-binding protein G(s) subunit alpha GNAS. Essential for cell migration. Interacts in complex with G(i) alpha subunits with the EGFR receptor, retaining EGFR at the cell membrane following ligand stimulation and promoting EGFR signaling which triggers cell migration. Binding to Gi-alpha subunits displaces the beta and gamma subunits from the heterotrimeric G-protein complex which enhances phosphoinositide 3-kinase (PI3K)-dependent phosphorylation and kinase activity of AKT1/PKB. Phosphorylation of AKT1/PKB induces the phosphorylation of downstream effectors GSK3 and FOXO1/FKHR, and regulates DNA replication and cell proliferation. Binds in its tyrosine-phosphorylated form to the phosphatidylinositol 3-kinase (PI3K) regulatory subunit PIK3R1 which enables recruitment of PIK3R1 to the EGFR receptor, enhancing PI3K activity and cell migration. Plays a role as a key modulator of the AKT-mTOR signaling pathway, controlling the tempo of the process of newborn neuron integration during adult neurogenesis, including correct neuron positioning, dendritic development and synapse formation. Inhibition of G(s) subunit alpha GNAS leads to reduced cellular levels of cAMP and suppression of cell proliferation. Essential for the integrity of the actin cytoskeleton. Required for formation of actin stress fibers and lamellipodia. May be involved in membrane sorting in the early endosome. Plays a role in ciliogenesis and cilium morphology and positioning and this may partly be through regulation of the localization of scaffolding protein CROCC/Rootletin. The chain is Girdin (Ccdc88a) from Mus musculus (Mouse).